A 334-amino-acid chain; its full sequence is Nucleoid-associated protein PFL_1060 (334 aa).

This sequence belongs to the YejK family.

Its subcellular location is the cytoplasm. The protein resides in the nucleoid. The protein is Nucleoid-associated protein PFL_1060 of Pseudomonas fluorescens (strain ATCC BAA-477 / NRRL B-23932 / Pf-5).